The chain runs to 889 residues: Mixed-linked glucan synthase 2 (889 aa).

Positions 34–53 (AGADGQNGRRSPVAKRVNDG) are disordered. 2 consecutive transmembrane segments (helical) span residues 93–113 (ILHP…AFFA) and 123–143 (GVWL…SWVL). The active site involves Asp-213. A coiled-coil region spans residues 265–293 (ELMSDHRRVRREYEEFKVRIDSLSSTIRQ). Asp-411 and Asp-413 together coordinate substrate. Asp-579 is a catalytic residue. The next 6 helical transmembrane spans lie at 655–675 (TYPI…MWLI), 685–705 (FGEY…IGMF), 723–743 (FYMI…ALKL), 777–797 (LLIP…VAVG), 811–831 (LAVL…PFAL), and 842–862 (AVLF…YVAF).

It belongs to the glycosyltransferase 2 family. Plant cellulose synthase-like F subfamily.

It is found in the golgi apparatus membrane. In terms of biological role, catalyzes both beta-1,3 and beta-1,4 glycosidic linkage on beta-D-glucan. Essential for (1,3;1,4)-beta-D-glucans synthesis in grasses and cereals (Poaceae). The mixed-linked glucans (which are not present in walls of dicotyledons or most other monocotyledonous plants) are particularly important constituents of the walls of the starchy endosperm and aleurone cells of cereal grains such as oats, wheat, rice and barley. They can account for up to 70% by weight of the wall. The chain is Mixed-linked glucan synthase 2 (CSLF2) from Oryza sativa subsp. japonica (Rice).